We begin with the raw amino-acid sequence, 378 residues long: uncharacterized protein (378 aa).

Transmembrane regions (helical) follow at residues 12–34 (SLAFALYDTGETILGALVVSTFF), 44–66 (VKIYSLSYGISLLASFALAIFLG), 92–112 (SIALLYGTPYLALLSFLLMLI), 132–154 (GFASGLGVSFGYVGSAIALIFLA), 161–180 (EVYAVVGLIFLILAVPSIIT), 200–222 (TFLLFLLSLLTLTEVANTLIAMM), 235–257 (VEIYRIIGFSALGGVLGGIFWGV), 267–285 (VFPLGFFLWSFFFILLFFA), 290–312 (LIFVGLLAGFSLAHLWSTSRVYI), 327–349 (FLSLTERVASSFGLFLWSFFLFI), and 356–373 (LSALLMGTLPLIGFFIYL).

The protein localises to the cell membrane. This is an uncharacterized protein from Aquifex aeolicus (strain VF5).